Reading from the N-terminus, the 195-residue chain is 3-isopropylmalate dehydratase small subunit (195 aa).

This sequence belongs to the LeuD family. LeuD type 1 subfamily. As to quaternary structure, heterodimer of LeuC and LeuD.

It catalyses the reaction (2R,3S)-3-isopropylmalate = (2S)-2-isopropylmalate. The protein operates within amino-acid biosynthesis; L-leucine biosynthesis; L-leucine from 3-methyl-2-oxobutanoate: step 2/4. In terms of biological role, catalyzes the isomerization between 2-isopropylmalate and 3-isopropylmalate, via the formation of 2-isopropylmaleate. This Karelsulcia muelleri (strain GWSS) (Sulcia muelleri) protein is 3-isopropylmalate dehydratase small subunit.